The following is a 362-amino-acid chain: RING finger protein 32 (362 aa).

The RING-type 1; atypical zinc finger occupies 127–169; it reads CPICKEEFELRPQVLLSCSHVFHRACLQAFEKFTNKKTCPLCR. An IQ domain is found at 186–215; it reads RIKCVTRIQAYWRGYVVRKWYRNLRETVPP. The RING-type 2; atypical zinc finger occupies 293–352; that stretch reads CSICLAPLSPAGGQRVGAGQRSRETALLSCSHVFHHACLLALEEFSVGDRPPFHACPLCR.

It is found in the cytoplasm. Functionally, may play a role in sperm formation. The polypeptide is RING finger protein 32 (RNF32) (Macaca fascicularis (Crab-eating macaque)).